The following is a 378-amino-acid chain: Nucleosome assembly protein 1;1 (378 aa).

Residues 33–87 adopt a coiled-coil conformation; sequence VNALKDKLQSLAGQHTDVLEALSPNVRKRVEYLREIQGQHDEIELKFFEERAALE. The Nuclear export signal signature appears at 54-69; sequence LSPNVRKRVEYLREIQ. The Nuclear localization signal signature appears at 230–235; that stretch reads KKKPKK. The segment at 306–378 is disordered; it reads AVQAEDFDDM…ADQPADCKQQ (73 aa). Over residues 308–344 the composition is skewed to acidic residues; that stretch reads QAEDFDDMEDDEEDDEDDDEDEEEEEEDEDEDEDDEE. A Nuclear localization signal motif is present at residues 348-352; it reads KPKKK. Positions 356–378 are enriched in low complexity; it reads KPKLPSKGGAQGGADQPADCKQQ. C375 carries the cysteine methyl ester modification. The S-farnesyl cysteine moiety is linked to residue C375. Residues 376–378 constitute a propeptide, removed in mature form; the sequence is KQQ.

This sequence belongs to the nucleosome assembly protein (NAP) family.

The protein resides in the nucleus. It is found in the cytoplasm. In terms of biological role, may modulate chromatin structure by regulation of nucleosome assembly/disassembly. The chain is Nucleosome assembly protein 1;1 (NAP1;1) from Oryza sativa subsp. japonica (Rice).